A 414-amino-acid chain; its full sequence is Methyltransferase-like protein 2 (414 aa).

A disordered region spans residues 56–77 (LNQHSSESNPKKRKRKQKNSSF).

It belongs to the MT-A70-like family.

Its function is as follows. Probable methyltransferase. The sequence is that of Methyltransferase-like protein 2 from Arabidopsis thaliana (Mouse-ear cress).